Consider the following 253-residue polypeptide: 5-oxoprolinase subunit A (253 aa).

This sequence belongs to the LamB/PxpA family. Forms a complex composed of PxpA, PxpB and PxpC.

The enzyme catalyses 5-oxo-L-proline + ATP + 2 H2O = L-glutamate + ADP + phosphate + H(+). Functionally, catalyzes the cleavage of 5-oxoproline to form L-glutamate coupled to the hydrolysis of ATP to ADP and inorganic phosphate. The sequence is that of 5-oxoprolinase subunit A from Bacillus cereus (strain ATCC 14579 / DSM 31 / CCUG 7414 / JCM 2152 / NBRC 15305 / NCIMB 9373 / NCTC 2599 / NRRL B-3711).